The sequence spans 285 residues: Probable endonuclease 4 (285 aa).

Zn(2+)-binding residues include histidine 69, histidine 109, glutamate 145, aspartate 179, histidine 182, histidine 216, aspartate 229, histidine 231, and glutamate 261.

Belongs to the AP endonuclease 2 family. Zn(2+) serves as cofactor.

It carries out the reaction Endonucleolytic cleavage to 5'-phosphooligonucleotide end-products.. In terms of biological role, endonuclease IV plays a role in DNA repair. It cleaves phosphodiester bonds at apurinic or apyrimidinic (AP) sites, generating a 3'-hydroxyl group and a 5'-terminal sugar phosphate. The polypeptide is Probable endonuclease 4 (Shigella boydii serotype 18 (strain CDC 3083-94 / BS512)).